Reading from the N-terminus, the 317-residue chain is Coproporphyrinogen-III oxidase, aerobic 1 (317 aa).

Residues 38-47 form an important for dimerization region; that stretch reads VLRDGAIFEQ. Residue serine 82 coordinates substrate. The Proton donor role is filled by histidine 96. Substrate contacts are provided by residues 98–100 and 269–274; these read NYR and NGRTES. Positions 251-286 are important for dimerization; the sequence is YVEFNLVYDRGTIFGLQTNGRTESILMSLPPLVRWE.

It belongs to the aerobic coproporphyrinogen-III oxidase family. Homodimer.

It localises to the cytoplasm. It carries out the reaction coproporphyrinogen III + O2 + 2 H(+) = protoporphyrinogen IX + 2 CO2 + 2 H2O. It functions in the pathway porphyrin-containing compound metabolism; protoporphyrin-IX biosynthesis; protoporphyrinogen-IX from coproporphyrinogen-III (O2 route): step 1/1. Functionally, key enzyme in heme biosynthesis. Catalyzes the oxidative decarboxylation of propionic acid side chains of rings A and B of coproporphyrinogen III. This chain is Coproporphyrinogen-III oxidase, aerobic 1, found in Nostoc sp. (strain PCC 7120 / SAG 25.82 / UTEX 2576).